Here is a 121-residue protein sequence, read N- to C-terminus: MFLLPKYNSFFIFLLLASVIPILAFSISKFLAPNNTQGPEKLTSYESGIEPMGDAWIQFQIRYYMFALVFVIFDVETVFLYPWAMSFNDLGLSAFIEALVFVFILIIGLVYAWRKGALEWS.

A run of 3 helical transmembrane segments spans residues 10–30 (FFIF…ISKF), 65–85 (MFAL…PWAM), and 90–110 (LGLS…IGLV).

This sequence belongs to the complex I subunit 3 family. NDH is composed of at least 16 different subunits, 5 of which are encoded in the nucleus.

Its subcellular location is the plastid. It localises to the chloroplast thylakoid membrane. The enzyme catalyses a plastoquinone + NADH + (n+1) H(+)(in) = a plastoquinol + NAD(+) + n H(+)(out). It catalyses the reaction a plastoquinone + NADPH + (n+1) H(+)(in) = a plastoquinol + NADP(+) + n H(+)(out). In terms of biological role, NDH shuttles electrons from NAD(P)H:plastoquinone, via FMN and iron-sulfur (Fe-S) centers, to quinones in the photosynthetic chain and possibly in a chloroplast respiratory chain. The immediate electron acceptor for the enzyme in this species is believed to be plastoquinone. Couples the redox reaction to proton translocation, and thus conserves the redox energy in a proton gradient. This chain is NAD(P)H-quinone oxidoreductase subunit 3, chloroplastic, found in Physcomitrium patens (Spreading-leaved earth moss).